The primary structure comprises 372 residues: Aryl-hydrocarbon-interacting protein-like 1 (372 aa).

Positions 53 to 145 (REVGQPMHII…DLDELQKEPQ (93 aa)) constitute a PPIase FKBP-type domain. 3 TPR repeats span residues 178–211 (VPVLHGEGNRLFKLGRYEEASSKYQEAIICLRNL), 230–263 (NTLILNYCQCLLKKEEYYEVLEHTSDILRHHPGI), and 264–297 (VKAYYVRARAHAEVWNEAEAKADLQKVLELEPSM). The interval 325–372 (NMLSQGATWSPAEPPAEPPAESSTEPPAEPPAEPPAELTLTPGHPLQH) is disordered.

As to quaternary structure, interacts with NUB1.

Its subcellular location is the cytoplasm. The protein resides in the nucleus. In terms of biological role, may be important in protein trafficking and/or protein folding and stabilization. The protein is Aryl-hydrocarbon-interacting protein-like 1 (AIPL1) of Saimiri boliviensis boliviensis (Bolivian squirrel monkey).